The following is a 221-amino-acid chain: MNHEGLRVMGIDPGLTRCGLSVVQAGRGRTVYPVSVGVVRTPPDAELAERLLRLSKAVGEWMDEYTPDVIAIERVFERGNVSTVMNTAHAVGVLILAAAERGLPVHMYTPSEVKKAISGNGRADKKQMTVMITRILGLGEPPKPADAADALSLAVCHCWRAPMLMRAQSQYSEQELEKRRRVQQGKLGKAKSTYNAEQAQSHASDPAKAAHPSQFQRTDTN.

Catalysis depends on residues D12, E73, and D146. 3 residues coordinate Mg(2+): D12, E73, and D146. The tract at residues 169–221 (SQYSEQELEKRRRVQQGKLGKAKSTYNAEQAQSHASDPAKAAHPSQFQRTDTN) is disordered. The segment covering 192–203 (STYNAEQAQSHA) has biased composition (polar residues).

It belongs to the RuvC family. As to quaternary structure, homodimer which binds Holliday junction (HJ) DNA. The HJ becomes 2-fold symmetrical on binding to RuvC with unstacked arms; it has a different conformation from HJ DNA in complex with RuvA. In the full resolvosome a probable DNA-RuvA(4)-RuvB(12)-RuvC(2) complex forms which resolves the HJ. It depends on Mg(2+) as a cofactor.

The protein localises to the cytoplasm. The enzyme catalyses Endonucleolytic cleavage at a junction such as a reciprocal single-stranded crossover between two homologous DNA duplexes (Holliday junction).. The RuvA-RuvB-RuvC complex processes Holliday junction (HJ) DNA during genetic recombination and DNA repair. Endonuclease that resolves HJ intermediates. Cleaves cruciform DNA by making single-stranded nicks across the HJ at symmetrical positions within the homologous arms, yielding a 5'-phosphate and a 3'-hydroxyl group; requires a central core of homology in the junction. The consensus cleavage sequence is 5'-(A/T)TT(C/G)-3'. Cleavage occurs on the 3'-side of the TT dinucleotide at the point of strand exchange. HJ branch migration catalyzed by RuvA-RuvB allows RuvC to scan DNA until it finds its consensus sequence, where it cleaves and resolves the cruciform DNA. This Corynebacterium glutamicum (strain ATCC 13032 / DSM 20300 / JCM 1318 / BCRC 11384 / CCUG 27702 / LMG 3730 / NBRC 12168 / NCIMB 10025 / NRRL B-2784 / 534) protein is Crossover junction endodeoxyribonuclease RuvC.